The primary structure comprises 176 residues: Ribosome rescue factor SmrB (176 aa).

The 76-residue stretch at 97-172 (LDMHGMTQQE…GDGALLVLLS (76 aa)) folds into the Smr domain.

The protein belongs to the SmrB family. Associates with collided ribosomes, but not with correctly translating polysomes.

Its function is as follows. Acts as a ribosome collision sensor. Detects stalled/collided disomes (pairs of ribosomes where the leading ribosome is stalled and a second ribosome has collided with it) and endonucleolytically cleaves mRNA at the 5' boundary of the stalled ribosome. Stalled/collided disomes form a new interface (primarily via the 30S subunits) that binds SmrB. Cleaved mRNA becomes available for tmRNA ligation, leading to ribosomal subunit dissociation and rescue of stalled ribosomes. The chain is Ribosome rescue factor SmrB from Vibrio campbellii (strain ATCC BAA-1116).